Consider the following 901-residue polypeptide: Pantothenate kinase 2 (901 aa).

The segment covering 1–10 (MAGQEDEYDP) has biased composition (acidic residues). Positions 1 to 50 (MAGQEDEYDPILDNKREAEAKSQVSVAADKNMAPSTSGTPIHRSGSRPQL) are disordered. The interval 1–466 (MAGQEDEYDP…LGDLDEKISW (466 aa)) is pantothenate kinase. Residues 467 to 901 (MEKFVRRGTE…CVCRYEPPSL (435 aa)) form a 4'-phosphopantetheine phosphatase region. Mn(2+) is bound by residues aspartate 731, asparagine 732, and aspartate 767. Positions 851 to 855 (EGMGR) match the Subfamily II EGMGR motif motif.

It in the N-terminal section; belongs to the type II pantothenate kinase family. The protein in the C-terminal section; belongs to the damage-control phosphatase family. Phosphopantetheine phosphatase II subfamily. It depends on Mn(2+) as a cofactor. Ni(2+) is required as a cofactor. In terms of tissue distribution, highly expressed in leaves and developing seeds. Expressed in roots, stems and flowers.

It catalyses the reaction (R)-pantothenate + ATP = (R)-4'-phosphopantothenate + ADP + H(+). The catalysed reaction is (R)-4'-phosphopantothenate + H2O = (R)-pantothenate + phosphate. The enzyme catalyses (R)-4'-phosphopantetheine + H2O = (R)-pantetheine + phosphate. It carries out the reaction (R)-4'-phosphopantetheine sulfonate + H2O = (R)-pantetheine sulfonate + phosphate. Its pathway is cofactor biosynthesis; coenzyme A biosynthesis; CoA from (R)-pantothenate: step 1/5. Its activity is regulated as follows. Activity is strongly promoted by Co(2+), Ni(2+) and Mn(2+). Activity is inhibited by EDTA. Catalyzes the phosphorylation of pantothenate the first step in CoA biosynthesis. May play a role in the physiological regulation of the intracellular CoA concentration. Functionally redudant with PANK1. The phosphatase activity shows preference for normal or oxidatively damaged intermediates of 4'-phosphopantetheine, which provides strong indirect evidence that the phosphatase activity pre-empts damage in the CoA pathway. Hydrolyzing excess 4'-phosphopantetheine could constitute a directed overflow mechanism to prevent its oxidation to the S-sulfonate, sulfonate, or other forms. Hydrolyzing 4'-phosphopantetheine sulfonate or S-sulfonate would forestall their conversion to inactive forms of CoA and acyl carrier protein. The protein is Pantothenate kinase 2 (PANK2) of Arabidopsis thaliana (Mouse-ear cress).